A 468-amino-acid chain; its full sequence is ATP synthase subunit beta (468 aa).

Residue 148-155 participates in ATP binding; the sequence is GGAGVGKT.

This sequence belongs to the ATPase alpha/beta chains family. As to quaternary structure, F-type ATPases have 2 components, CF(1) - the catalytic core - and CF(0) - the membrane proton channel. CF(1) has five subunits: alpha(3), beta(3), gamma(1), delta(1), epsilon(1). CF(0) has three main subunits: a(1), b(2) and c(9-12). The alpha and beta chains form an alternating ring which encloses part of the gamma chain. CF(1) is attached to CF(0) by a central stalk formed by the gamma and epsilon chains, while a peripheral stalk is formed by the delta and b chains.

The protein resides in the cell inner membrane. The catalysed reaction is ATP + H2O + 4 H(+)(in) = ADP + phosphate + 5 H(+)(out). Functionally, produces ATP from ADP in the presence of a proton gradient across the membrane. The catalytic sites are hosted primarily by the beta subunits. The protein is ATP synthase subunit beta of Xanthomonas axonopodis pv. citri (strain 306).